A 137-amino-acid polypeptide reads, in one-letter code: Large ribosomal subunit protein uL16 (137 aa).

Belongs to the universal ribosomal protein uL16 family. Part of the 50S ribosomal subunit.

Its function is as follows. Binds 23S rRNA and is also seen to make contacts with the A and possibly P site tRNAs. The chain is Large ribosomal subunit protein uL16 from Acinetobacter baumannii (strain AB307-0294).